The following is a 59-amino-acid chain: Temporin-CDYd (59 aa).

Positions 1–22 are cleaved as a signal peptide; that stretch reads MFTLKKSMLLLLFLGTISLTLC. A propeptide spanning residues 23-42 is cleaved from the precursor; it reads EEERDANEEEENGGEVKEEE.

It belongs to the frog skin active peptide (FSAP) family. Temporin subfamily. In terms of tissue distribution, expressed by the skin glands.

The protein localises to the secreted. Antimicrobial peptide. The sequence is that of Temporin-CDYd from Rana dybowskii (Dybovsky's frog).